A 291-amino-acid chain; its full sequence is Undecaprenyl-diphosphatase (291 aa).

Helical transmembrane passes span 1 to 21, 48 to 68, 102 to 122, 126 to 146, 162 to 182, 203 to 223, 231 to 251, and 267 to 287; these read MFII…LTEF, SAFT…AWVF, LHVL…DDFI, LFSV…MIIA, INYF…WPGF, SDFT…LSLL, IADI…GLIA, and FAIY…GFGI.

This sequence belongs to the UppP family.

It is found in the cell membrane. The enzyme catalyses di-trans,octa-cis-undecaprenyl diphosphate + H2O = di-trans,octa-cis-undecaprenyl phosphate + phosphate + H(+). In terms of biological role, catalyzes the dephosphorylation of undecaprenyl diphosphate (UPP). Confers resistance to bacitracin. The chain is Undecaprenyl-diphosphatase from Staphylococcus aureus (strain Mu3 / ATCC 700698).